A 432-amino-acid polypeptide reads, in one-letter code: Adenylosuccinate synthetase (432 aa).

GTP-binding positions include 13 to 19 and 41 to 43; these read GDEGKGK and GHT. Asp14 (proton acceptor) is an active-site residue. Asp14 and Gly41 together coordinate Mg(2+). Residues 14–17, 39–42, Thr130, Arg144, Gln225, Thr240, and Arg304 contribute to the IMP site; these read DEGK and NAGH. Residue His42 is the Proton donor of the active site. 300–306 provides a ligand contact to substrate; that stretch reads ATTGRRR. GTP-binding positions include Arg306, 332–334, and 415–417; these read KLD and STG.

The protein belongs to the adenylosuccinate synthetase family. As to quaternary structure, homodimer. Requires Mg(2+) as cofactor.

It is found in the cytoplasm. The enzyme catalyses IMP + L-aspartate + GTP = N(6)-(1,2-dicarboxyethyl)-AMP + GDP + phosphate + 2 H(+). The protein operates within purine metabolism; AMP biosynthesis via de novo pathway; AMP from IMP: step 1/2. In terms of biological role, plays an important role in the de novo pathway of purine nucleotide biosynthesis. Catalyzes the first committed step in the biosynthesis of AMP from IMP. The polypeptide is Adenylosuccinate synthetase (Klebsiella pneumoniae (strain 342)).